The following is a 208-amino-acid chain: Redox-sensing transcriptional repressor Rex 1 (208 aa).

The H-T-H motif DNA-binding region spans 15–54 (SYYMCLERLLDEGVEVVSSEELARRLDLKASQIRKDLSYF). 89-94 (GAGNIG) provides a ligand contact to NAD(+).

Belongs to the transcriptional regulatory Rex family. As to quaternary structure, homodimer.

The protein localises to the cytoplasm. Modulates transcription in response to changes in cellular NADH/NAD(+) redox state. The polypeptide is Redox-sensing transcriptional repressor Rex 1 (Thermotoga maritima (strain ATCC 43589 / DSM 3109 / JCM 10099 / NBRC 100826 / MSB8)).